The sequence spans 58 residues: Ribulose bisphosphate carboxylase large chain (58 aa).

Residues 1–2 (MS) constitute a propeptide that is removed on maturation. P3 is subject to N-acetylproline. K14 carries the post-translational modification N6,N6,N6-trimethyllysine.

Belongs to the RuBisCO large chain family. Type I subfamily. Heterohexadecamer of 8 large chains and 8 small chains.

It is found in the plastid. The protein resides in the chloroplast. The catalysed reaction is 2 (2R)-3-phosphoglycerate + 2 H(+) = D-ribulose 1,5-bisphosphate + CO2 + H2O. It carries out the reaction D-ribulose 1,5-bisphosphate + O2 = 2-phosphoglycolate + (2R)-3-phosphoglycerate + 2 H(+). Functionally, ruBisCO catalyzes two reactions: the carboxylation of D-ribulose 1,5-bisphosphate, the primary event in carbon dioxide fixation, as well as the oxidative fragmentation of the pentose substrate in the photorespiration process. Both reactions occur simultaneously and in competition at the same active site. The polypeptide is Ribulose bisphosphate carboxylase large chain (rbcL) (Euonymus maackii (Maack's spindle tree)).